We begin with the raw amino-acid sequence, 182 residues long: Inosine/xanthosine triphosphatase (182 aa).

This sequence belongs to the YjjX NTPase family. In terms of assembly, homodimer. Mg(2+) is required as a cofactor. The cofactor is Mn(2+).

It carries out the reaction XTP + H2O = XDP + phosphate + H(+). The enzyme catalyses ITP + H2O = IDP + phosphate + H(+). In terms of biological role, phosphatase that hydrolyzes non-canonical purine nucleotides such as XTP and ITP to their respective diphosphate derivatives. Probably excludes non-canonical purines from DNA/RNA precursor pool, thus preventing their incorporation into DNA/RNA and avoiding chromosomal lesions. The polypeptide is Inosine/xanthosine triphosphatase (Vibrio parahaemolyticus serotype O3:K6 (strain RIMD 2210633)).